We begin with the raw amino-acid sequence, 365 residues long: 3-dehydroquinate synthase (365 aa).

NAD(+)-binding positions include 106 to 110 (GVIGD), 130 to 131 (TT), Lys-142, Lys-151, and 169 to 172 (FFAT). Residues Glu-184, His-247, and His-264 each contribute to the Zn(2+) site.

Belongs to the sugar phosphate cyclases superfamily. Dehydroquinate synthase family. It depends on NAD(+) as a cofactor. Co(2+) serves as cofactor. Zn(2+) is required as a cofactor.

The protein localises to the cytoplasm. It catalyses the reaction 7-phospho-2-dehydro-3-deoxy-D-arabino-heptonate = 3-dehydroquinate + phosphate. The protein operates within metabolic intermediate biosynthesis; chorismate biosynthesis; chorismate from D-erythrose 4-phosphate and phosphoenolpyruvate: step 2/7. Catalyzes the conversion of 3-deoxy-D-arabino-heptulosonate 7-phosphate (DAHP) to dehydroquinate (DHQ). The sequence is that of 3-dehydroquinate synthase from Listeria innocua serovar 6a (strain ATCC BAA-680 / CLIP 11262).